The primary structure comprises 184 residues: ATP synthase subunit b, chloroplastic (184 aa).

Residues 4-24 form a helical membrane-spanning segment; the sequence is IINLVIFSGYWPIAGNFGLNT.

Belongs to the ATPase B chain family. F-type ATPases have 2 components, F(1) - the catalytic core - and F(0) - the membrane proton channel. F(1) has five subunits: alpha(3), beta(3), gamma(1), delta(1), epsilon(1). F(0) has four main subunits: a(1), b(1), b'(1) and c(10-14). The alpha and beta chains form an alternating ring which encloses part of the gamma chain. F(1) is attached to F(0) by a central stalk formed by the gamma and epsilon chains, while a peripheral stalk is formed by the delta, b and b' chains.

It is found in the plastid. It localises to the chloroplast thylakoid membrane. F(1)F(0) ATP synthase produces ATP from ADP in the presence of a proton or sodium gradient. F-type ATPases consist of two structural domains, F(1) containing the extramembraneous catalytic core and F(0) containing the membrane proton channel, linked together by a central stalk and a peripheral stalk. During catalysis, ATP synthesis in the catalytic domain of F(1) is coupled via a rotary mechanism of the central stalk subunits to proton translocation. Functionally, component of the F(0) channel, it forms part of the peripheral stalk, linking F(1) to F(0). The chain is ATP synthase subunit b, chloroplastic from Physcomitrium patens (Spreading-leaved earth moss).